The following is a 446-amino-acid chain: Phosphoglucosamine mutase (446 aa).

The Phosphoserine intermediate role is filled by Ser100. The Mg(2+) site is built by Ser100, Asp241, Asp243, and Asp245. Ser100 carries the phosphoserine modification.

The protein belongs to the phosphohexose mutase family. Requires Mg(2+) as cofactor. Post-translationally, activated by phosphorylation.

The catalysed reaction is alpha-D-glucosamine 1-phosphate = D-glucosamine 6-phosphate. Catalyzes the conversion of glucosamine-6-phosphate to glucosamine-1-phosphate. The sequence is that of Phosphoglucosamine mutase from Methylorubrum populi (strain ATCC BAA-705 / NCIMB 13946 / BJ001) (Methylobacterium populi).